A 156-amino-acid polypeptide reads, in one-letter code: Small ribosomal subunit protein uS7 (156 aa).

Belongs to the universal ribosomal protein uS7 family. In terms of assembly, part of the 30S ribosomal subunit. Contacts proteins S9 and S11.

Functionally, one of the primary rRNA binding proteins, it binds directly to 16S rRNA where it nucleates assembly of the head domain of the 30S subunit. Is located at the subunit interface close to the decoding center, probably blocks exit of the E-site tRNA. The protein is Small ribosomal subunit protein uS7 of Nitrosospira multiformis (strain ATCC 25196 / NCIMB 11849 / C 71).